The primary structure comprises 341 residues: Phosphate acyltransferase (341 aa).

It belongs to the PlsX family. In terms of assembly, homodimer. Probably interacts with PlsY.

The protein localises to the cytoplasm. It catalyses the reaction a fatty acyl-[ACP] + phosphate = an acyl phosphate + holo-[ACP]. The protein operates within lipid metabolism; phospholipid metabolism. Functionally, catalyzes the reversible formation of acyl-phosphate (acyl-PO(4)) from acyl-[acyl-carrier-protein] (acyl-ACP). This enzyme utilizes acyl-ACP as fatty acyl donor, but not acyl-CoA. This is Phosphate acyltransferase from Saccharophagus degradans (strain 2-40 / ATCC 43961 / DSM 17024).